We begin with the raw amino-acid sequence, 141 residues long: ATP synthase epsilon chain (141 aa).

The protein belongs to the ATPase epsilon chain family. F-type ATPases have 2 components, CF(1) - the catalytic core - and CF(0) - the membrane proton channel. CF(1) has five subunits: alpha(3), beta(3), gamma(1), delta(1), epsilon(1). CF(0) has three main subunits: a, b and c.

The protein resides in the cell inner membrane. Its function is as follows. Produces ATP from ADP in the presence of a proton gradient across the membrane. The protein is ATP synthase epsilon chain of Teredinibacter turnerae (strain ATCC 39867 / T7901).